A 335-amino-acid chain; its full sequence is UPF0324 membrane protein LMOf2365_2179 (335 aa).

8 helical membrane-spanning segments follow: residues threonine 10–leucine 28, phenylalanine 33–proline 55, alanine 91–leucine 113, leucine 123–isoleucine 142, valine 155–isoleucine 177, valine 251–isoleucine 270, phenylalanine 277–leucine 299, and proline 309–phenylalanine 331.

It belongs to the UPF0324 family.

The protein resides in the cell membrane. This Listeria monocytogenes serotype 4b (strain F2365) protein is UPF0324 membrane protein LMOf2365_2179.